The primary structure comprises 305 residues: Small ribosomal subunit protein uS3 (305 aa).

One can recognise a KH type-2 domain in the interval isoleucine 17 to aspartate 86. Composition is skewed to acidic residues over residues glutamate 207–threonine 262 and alanine 272–threonine 305. Positions glutamate 207 to threonine 305 are disordered.

This sequence belongs to the universal ribosomal protein uS3 family. Part of the 30S ribosomal subunit.

In terms of biological role, binds the lower part of the 30S subunit head. This Natronomonas pharaonis (strain ATCC 35678 / DSM 2160 / CIP 103997 / JCM 8858 / NBRC 14720 / NCIMB 2260 / Gabara) (Halobacterium pharaonis) protein is Small ribosomal subunit protein uS3.